We begin with the raw amino-acid sequence, 621 residues long: tRNA 5-methylaminomethyl-2-thiouridine biosynthesis bifunctional protein MnmC (621 aa).

The tract at residues 1 to 222 (MKNANLSFKG…KRQMSSAVLE (222 aa)) is tRNA (mnm(5)s(2)U34)-methyltransferase. Positions 250 to 621 (IGTGVAGLAT…LIRKLKKGLK (372 aa)) are FAD-dependent cmnm(5)s(2)U34 oxidoreductase.

It in the N-terminal section; belongs to the methyltransferase superfamily. tRNA (mnm(5)s(2)U34)-methyltransferase family. This sequence in the C-terminal section; belongs to the DAO family. It depends on FAD as a cofactor.

The protein localises to the cytoplasm. It catalyses the reaction 5-aminomethyl-2-thiouridine(34) in tRNA + S-adenosyl-L-methionine = 5-methylaminomethyl-2-thiouridine(34) in tRNA + S-adenosyl-L-homocysteine + H(+). Catalyzes the last two steps in the biosynthesis of 5-methylaminomethyl-2-thiouridine (mnm(5)s(2)U) at the wobble position (U34) in tRNA. Catalyzes the FAD-dependent demodification of cmnm(5)s(2)U34 to nm(5)s(2)U34, followed by the transfer of a methyl group from S-adenosyl-L-methionine to nm(5)s(2)U34, to form mnm(5)s(2)U34. This is tRNA 5-methylaminomethyl-2-thiouridine biosynthesis bifunctional protein MnmC from Campylobacter concisus (strain 13826).